The primary structure comprises 259 residues: DNA adenine methylase (259 aa).

S-adenosyl-L-methionine is bound by residues Tyr-7, Lys-11, 32 to 37, Asp-50, 156 to 157, Asp-171, and Tyr-181; these read FCGGLS and HF.

Belongs to the N(4)/N(6)-methyltransferase family. Monomer.

It carries out the reaction a 2'-deoxyadenosine in DNA + S-adenosyl-L-methionine = an N(6)-methyl-2'-deoxyadenosine in DNA + S-adenosyl-L-homocysteine + H(+). Its function is as follows. An alpha subtype methylase, recognizes the double-stranded sequence 5'-GATC-3' and methylates A-2. Also acts on 5-hydroxymethylcytosine (hmC)-containing DNA, the normal base in this virus. May prevent degradation of viral DNA by the host restriction-modification antiviral defense system. This chain is DNA adenine methylase, found in Enterobacteria phage T4 (Bacteriophage T4).